The chain runs to 841 residues: Toll-like receptor 4 (841 aa).

Residues 1 to 23 (MMARARLAAALIPATAILSCLRT) form the signal peptide. Residues 24–632 (ESWDPCVQVV…FRNATCQLSK (609 aa)) lie on the Extracellular side of the membrane. Cysteine 29 and cysteine 40 are joined by a disulfide. Asparagine 35 and asparagine 73 each carry an N-linked (GlcNAc...) asparagine glycan. LRR repeat units follow at residues 55 to 76 (STKM…NFSS), 79 to 100 (ELQV…TFQG), 103 to 124 (HLST…AFSG), 127 to 148 (SLQK…PIGH), 151 to 172 (NLKE…EYFS), 176 to 197 (NLEH…DVKV), and 205 to 225 (NLSL…TFKE). Asparagine 205, asparagine 238, asparagine 282, and asparagine 309 each carry an N-linked (GlcNAc...) asparagine glycan. Residues cysteine 281 and cysteine 306 are joined by a disulfide bond. LRR repeat units follow at residues 352-373 (SLKK…FQLP), 374-394 (SLQY…CSHT), 400-422 (NLKH…MGLE), 423-444 (QLEH…SAFL), 448-469 (NLRY…IFTG), 472-495 (SLQT…FTEL), 497-518 (NLTV…AFHS), 521-542 (SLQV…LYEP), and 545-568 (SLRI…QNLP). Cysteine 390 and cysteine 391 are oxidised to a cystine. 2 N-linked (GlcNAc...) asparagine glycosylation sites follow: asparagine 497 and asparagine 526. The N-linked (GlcNAc...) asparagine glycan is linked to asparagine 575. Positions 579-630 (NAFACVCEHQSFLQWVKDQRQLLVGAEQMMCAEPLDMEDMPVLSFRNATCQL) constitute an LRRCT domain. 2 disulfides stabilise this stretch: cysteine 583-cysteine 609 and cysteine 585-cysteine 628. N-linked (GlcNAc...) asparagine glycosylation occurs at asparagine 625. The chain crosses the membrane as a helical span at residues 633 to 653 (TIISVSVVTVLLVSVVGVLVY). Topologically, residues 654-841 (KFYFHLMLLA…TNPQEATTST (188 aa)) are cytoplasmic. Residues 673 to 816 (SIYDAFVIYS…VFWRRLRKAL (144 aa)) enclose the TIR domain. Residues 820-841 (KPQSPEGTADAETNPQEATTST) form a disordered region. Polar residues predominate over residues 830–841 (AETNPQEATTST).

It belongs to the Toll-like receptor family. In terms of assembly, belongs to the lipopolysaccharide (LPS) receptor, a multi-protein complex containing at least CD14, LY96 and TLR4. Binding to bacterial LPS leads to homodimerization. Interacts with LY96 via the extracellular domain. Interacts with MYD88 and TIRAP via their respective TIR domains. Interacts with TICAM2. Interacts with NOX4. Interacts with CNPY3 and HSP90B1; this interaction is required for proper folding in the endoplasmic reticulum. Interacts with MAP3K21; this interaction leads to negative regulation of TLR4 signaling. Interacts with CD36, following CD36 stimulation by oxLDL or amyloid-beta 42, and forms a heterodimer with TLR6. The trimeric complex is internalized and triggers inflammatory response. LYN kinase activity facilitates TLR4-TLR6 heterodimerization and signal initiation. Interacts with TICAM1 in response to LPS in a WDFY1-dependent manner. Interacts with WDFY1 in response to LPS. Interacts with SMPDL3B. Interacts with CEACAM1; upon lipopolysaccharide stimulation, forms a complex including TLR4 and the phosphorylated form of SYK and CEACAM1, which in turn, recruits PTPN6 that dephosphorylates SYK, reducing the production of reactive oxygen species (ROS) and lysosome disruption, which in turn, reduces the activity of the inflammasome. Interacts with RFTN1; the interaction occurs in response to lipopolysaccharide stimulation. Interacts with SCIMP; the interaction occurs in response to lipopolysaccharide stimulation and is enhanced by phosphorylation of SCIMP by LYN. This interaction facilitates the phosphorylation of TLR4 by LYN which elicits a selective cytokine response in macrophages. Interacts with TRAF3IP3. Interacts with TREM1; this interaction enhances TLR4-mediated inflammatory response. Interacts with ZG16B/PAUF. Interacts with CD82; this interaction inhibits TLR4-mediated signaling pathway. In terms of processing, phosphorylated on tyrosine residues by LYN after binding lipopolysaccharide. Ubiquitinated by RNF128 via 'Lys-28'-linked polyubiquitin chains, leading to proteasomal degradation.

The protein resides in the cell membrane. The protein localises to the early endosome. Its subcellular location is the cell projection. It localises to the ruffle. In terms of biological role, transmembrane receptor that functions as a pattern recognition receptor recognizing pathogen- and damage-associated molecular patterns (PAMPs and DAMPs) to induce innate immune responses via downstream signaling pathways. At the plasma membrane, cooperates with LY96 to mediate the innate immune response to bacterial lipopolysaccharide (LPS). Also involved in LPS-independent inflammatory responses triggered by free fatty acids, such as palmitate, and Ni(2+). Mechanistically, acts via MYD88, TIRAP and TRAF6, leading to NF-kappa-B activation, cytokine secretion and the inflammatory response. Alternatively, CD14-mediated TLR4 internalization via endocytosis is associated with the initiation of a MYD88-independent signaling via the TICAM1-TBK1-IRF3 axis leading to type I interferon production. In addition to the secretion of proinflammatory cytokines, initiates the activation of NLRP3 inflammasome and formation of a positive feedback loop between autophagy and NF-kappa-B signaling cascade. In complex with TLR6, promotes inflammation in monocytes/macrophages by associating with TLR6 and the receptor CD86. Upon ligand binding, such as oxLDL or amyloid-beta 42, the TLR4:TLR6 complex is internalized and triggers inflammatory response, leading to NF-kappa-B-dependent production of CXCL1, CXCL2 and CCL9 cytokines, via MYD88 signaling pathway, and CCL5 cytokine, via TICAM1 signaling pathway. In myeloid dendritic cells, vesicular stomatitis virus glycoprotein G but not LPS promotes the activation of IRF7, leading to type I IFN production in a CD14-dependent manner. The chain is Toll-like receptor 4 (TLR4) from Bos taurus (Bovine).